The following is a 477-amino-acid chain: ACT domain-containing protein ACR1 (477 aa).

ACT domains are found at residues leucine 38 to glutamine 124, alanine 134 to serine 214, methionine 283 to glutamine 358, and lysine 361 to arginine 441. The short motif at lysine 329–arginine 345 is the Bipartite nuclear localization signal element.

In terms of tissue distribution, expressed in flowers and siliques.

The protein localises to the nucleus. In terms of biological role, may bind amino acids. The sequence is that of ACT domain-containing protein ACR1 from Arabidopsis thaliana (Mouse-ear cress).